The chain runs to 269 residues: Phosphatidylglycerol--prolipoprotein diacylglyceryl transferase (269 aa).

A run of 7 helical transmembrane segments spans residues 17 to 37 (LKIHWYGLMYLIGIGGAWLLA), 56 to 76 (LVFWLSMGVIVGGRLGYVLFY), 92 to 112 (WKGGMSFHGGFIGVMLAALWF), 120 to 140 (FFELMDFVAPLVPIGLGAGRI), 174 to 194 (PSQLYQFALEGVALFVILWLY), 202 to 222 (MAVSGMFALFYGIFRFIVEFV), and 237 to 257 (LTMGQLLCVPMIVGGLFLIWL). Arg139 provides a ligand contact to a 1,2-diacyl-sn-glycero-3-phospho-(1'-sn-glycerol).

Belongs to the Lgt family.

It localises to the cell inner membrane. The catalysed reaction is L-cysteinyl-[prolipoprotein] + a 1,2-diacyl-sn-glycero-3-phospho-(1'-sn-glycerol) = an S-1,2-diacyl-sn-glyceryl-L-cysteinyl-[prolipoprotein] + sn-glycerol 1-phosphate + H(+). Its pathway is protein modification; lipoprotein biosynthesis (diacylglyceryl transfer). In terms of biological role, catalyzes the transfer of the diacylglyceryl group from phosphatidylglycerol to the sulfhydryl group of the N-terminal cysteine of a prolipoprotein, the first step in the formation of mature lipoproteins. The chain is Phosphatidylglycerol--prolipoprotein diacylglyceryl transferase from Pseudomonas putida (strain W619).